Consider the following 968-residue polypeptide: RNA polymerase-associated protein RapA (968 aa).

The region spanning 164–334 is the Helicase ATP-binding domain; the sequence is DVGRRHAPRV…FARLRLLDPN (171 aa). 177–184 is an ATP binding site; it reads DEVGLGKT. Positions 280-283 match the DEAH box motif; that stretch reads DEAH. Positions 490 to 662 constitute a Helicase C-terminal domain; that stretch reads RVEWLMGYLT…YLASPDQTEG (173 aa).

It belongs to the SNF2/RAD54 helicase family. RapA subfamily. Interacts with the RNAP. Has a higher affinity for the core RNAP than for the holoenzyme. Its ATPase activity is stimulated by binding to RNAP.

Its function is as follows. Transcription regulator that activates transcription by stimulating RNA polymerase (RNAP) recycling in case of stress conditions such as supercoiled DNA or high salt concentrations. Probably acts by releasing the RNAP, when it is trapped or immobilized on tightly supercoiled DNA. Does not activate transcription on linear DNA. Probably not involved in DNA repair. The sequence is that of RNA polymerase-associated protein RapA from Shigella dysenteriae serotype 1 (strain Sd197).